Consider the following 148-residue polypeptide: Stathmin (148 aa).

The region spanning 4 to 145 is the SLD domain; sequence SDIQVKELEK…NKEGKDPGEA (142 aa). Residue Ser-16 is modified to Phosphoserine; by PKA. The residue at position 38 (Ser-38) is a Phosphoserine; by CDK1. Positions 41–140 form a coiled coil; that stretch reads KKKDLSLEEI…EEVRKNKEGK (100 aa). Phosphoserine; by PKA is present on Ser-63. The tract at residues 122 to 148 is disordered; it reads RLREKDKHIEEVRKNKEGKDPGEAETN.

The protein belongs to the stathmin family. As to quaternary structure, binds to two alpha/beta-tubulin heterodimers. Many different phosphorylated forms are observed depending on specific combinations among the sites which can be phosphorylated. MAPK is responsible for the phosphorylation of stathmin in response to NGF.

The protein localises to the cytoplasm. Its subcellular location is the cytoskeleton. Involved in the regulation of the microtubule (MT) filament system by destabilizing microtubules. It prevents assembly and promotes disassembly of microtubules. This Gallus gallus (Chicken) protein is Stathmin (STMN1).